Consider the following 429-residue polypeptide: tRNA threonylcarbamoyladenosine dehydratase 1 (429 aa).

2 helical membrane passes run 3–23 (NNTWKLIATTALISVFSTQLA) and 74–94 (EQYIVIVGAGEVGSWVCTMLI). Ser259 bears the Phosphoserine mark. The chain crosses the membrane as a helical span at residues 279–299 (LPELGTMPGIFGLSIATWILT).

Belongs to the HesA/MoeB/ThiF family.

It localises to the mitochondrion outer membrane. In terms of biological role, catalyzes the ATP-dependent dehydration of threonylcarbamoyladenosine at position 37 (t(6)A37) to form cyclic t(6)A37 (ct(6)A37) in tRNAs that read codons beginning with adenine. In Saccharomyces cerevisiae (strain ATCC 204508 / S288c) (Baker's yeast), this protein is tRNA threonylcarbamoyladenosine dehydratase 1 (TCD1).